Reading from the N-terminus, the 358-residue chain is MNLKSLSLQELEAALAPLSPSPAAVRKVFAAVFAHGAQSVEDVASARQVPRRVGDHLRAHAEMPKLAIVERRRADDGFVKYLFDSPLGGRIEAVRIPIFDEKYVICVSSQVGCALACDFCMTGKLGFKRNLQTWEILDQVLQVREEADRPVRGVVFMGMGEPLLNYKETLRAADILRHPAGFSIAGEAITFSTAGHVPAIRRYVREGHPYRLAFSVTSAIAEKRAKVLPIEKTHPLPELIAAIREYSEVRRERAMIAYVAISGFNMGREDAEALKVAFEGIRIKVDLIDVTDPTGKYLPPTPEELSAFRDHLQILKSPVARRYSGGKEIGAACGTLAATQYGGTVMPRPAEAPPSTTP.

The active-site Proton acceptor is the glutamate 92. The Radical SAM core domain occupies phenylalanine 99 to lysine 327. A disulfide bridge links cysteine 106 with cysteine 333. Residues cysteine 113, cysteine 117, and cysteine 120 each contribute to the [4Fe-4S] cluster site. S-adenosyl-L-methionine-binding positions include glycine 160 to glutamate 161, serine 192, serine 215 to threonine 217, and aspartate 289. The active-site S-methylcysteine intermediate is the cysteine 333.

Belongs to the radical SAM superfamily. RlmN family. [4Fe-4S] cluster serves as cofactor.

The protein resides in the cytoplasm. The protein is Probable RNA methyltransferase MXAN_6459 of Myxococcus xanthus (strain DK1622).